Reading from the N-terminus, the 217-residue chain is Proteasome subunit beta type-9 (217 aa).

Positions 1 to 18 (MLGEEAEPQWISEEVKTG) are cleaved as a propeptide — removed in mature form. Thr19 functions as the Nucleophile in the catalytic mechanism.

Belongs to the peptidase T1B family. In terms of assembly, the 26S proteasome consists of a 20S proteasome core and two 19S regulatory subunits. The 20S proteasome core is composed of 28 subunits that are arranged in four stacked rings, resulting in a barrel-shaped structure. The two end rings are each formed by seven alpha subunits, and the two central rings are each formed by seven beta subunits. The catalytic chamber with the active sites is on the inside of the barrel. Component of the immunoproteasome, where it displaces the equivalent housekeeping subunit PSMB6. Autocleaved. The resulting N-terminal Thr residue of the mature subunit is responsible for the nucleophile proteolytic activity.

The protein localises to the cytoplasm. The protein resides in the nucleus. The catalysed reaction is Cleavage of peptide bonds with very broad specificity.. Its function is as follows. The proteasome is a multicatalytic proteinase complex which is characterized by its ability to cleave peptides with Arg, Phe, Tyr, Leu, and Glu adjacent to the leaving group at neutral or slightly basic pH. The proteasome has an ATP-dependent proteolytic activity. This subunit is involved in antigen processing to generate class I binding peptides. This is Proteasome subunit beta type-9 (psmb9) from Oryzias latipes (Japanese rice fish).